Reading from the N-terminus, the 631-residue chain is Chaperone protein HtpG (631 aa).

Positions 1–339 (MSTNQETRGF…SNDLPLNVSR (339 aa)) are a; substrate-binding. The tract at residues 340 to 555 (EILQDNKVTS…DDQMTTQMAK (216 aa)) is b. The segment at 556-631 (LFAAAGQAMP…NTLLSKLTSH (76 aa)) is c.

Belongs to the heat shock protein 90 family. As to quaternary structure, homodimer.

The protein localises to the cytoplasm. Its function is as follows. Molecular chaperone. Has ATPase activity. The polypeptide is Chaperone protein HtpG (Pasteurella multocida (strain Pm70)).